A 513-amino-acid chain; its full sequence is GMP synthase [glutamine-hydrolyzing] (513 aa).

The region spanning 3 to 200 is the Glutamine amidotransferase type-1 domain; sequence SVLVLDFGSQ…LLNIAGITPD (198 aa). The active-site Nucleophile is C80. Catalysis depends on residues H174 and E176. The GMPS ATP-PPase domain occupies 201 to 388; sequence WSSKSFIDHQ…LGIAEDILMR (188 aa). 228–234 contributes to the ATP binding site; sequence SGGVDST.

As to quaternary structure, homodimer.

The catalysed reaction is XMP + L-glutamine + ATP + H2O = GMP + L-glutamate + AMP + diphosphate + 2 H(+). It participates in purine metabolism; GMP biosynthesis; GMP from XMP (L-Gln route): step 1/1. Catalyzes the synthesis of GMP from XMP. This Chlorobium phaeovibrioides (strain DSM 265 / 1930) (Prosthecochloris vibrioformis (strain DSM 265)) protein is GMP synthase [glutamine-hydrolyzing].